A 663-amino-acid chain; its full sequence is Translation factor GUF1 homolog, mitochondrial (663 aa).

The N-terminal 33 residues, 1-33 (MAGAAALRRSARRVVLPGAYALSRALQHPERLL), are a transit peptide targeting the mitochondrion. Residues 55–247 (ERVRNFSIIA…AVIERIPSPP (193 aa)) form the tr-type G domain. GTP is bound by residues 64-71 (AHVDHGKS), 140-144 (DTPGH), and 194-197 (NKID).

It belongs to the TRAFAC class translation factor GTPase superfamily. Classic translation factor GTPase family. LepA subfamily.

Its subcellular location is the mitochondrion inner membrane. The catalysed reaction is GTP + H2O = GDP + phosphate + H(+). Promotes mitochondrial protein synthesis. May act as a fidelity factor of the translation reaction, by catalyzing a one-codon backward translocation of tRNAs on improperly translocated ribosomes. Binds to mitochondrial ribosomes in a GTP-dependent manner. In Oryza sativa subsp. japonica (Rice), this protein is Translation factor GUF1 homolog, mitochondrial.